We begin with the raw amino-acid sequence, 480 residues long: Ribulose bisphosphate carboxylase large chain (480 aa).

Residues 1–2 (MS) constitute a propeptide that is removed on maturation. P3 carries the N-acetylproline modification. At K14 the chain carries N6,N6,N6-trimethyllysine. Substrate-binding residues include N123 and T173. K175 acts as the Proton acceptor in catalysis. Residue K177 participates in substrate binding. Residues K201, D203, and E204 each coordinate Mg(2+). K201 is modified (N6-carboxylysine). The Proton acceptor role is filled by H294. Positions 295, 327, and 379 each coordinate substrate.

The protein belongs to the RuBisCO large chain family. Type I subfamily. In terms of assembly, heterohexadecamer of 8 large chains and 8 small chains; disulfide-linked. The disulfide link is formed within the large subunit homodimers. It depends on Mg(2+) as a cofactor. In terms of processing, the disulfide bond which can form in the large chain dimeric partners within the hexadecamer appears to be associated with oxidative stress and protein turnover.

The protein localises to the plastid. It localises to the chloroplast. The catalysed reaction is 2 (2R)-3-phosphoglycerate + 2 H(+) = D-ribulose 1,5-bisphosphate + CO2 + H2O. The enzyme catalyses D-ribulose 1,5-bisphosphate + O2 = 2-phosphoglycolate + (2R)-3-phosphoglycerate + 2 H(+). Functionally, ruBisCO catalyzes two reactions: the carboxylation of D-ribulose 1,5-bisphosphate, the primary event in carbon dioxide fixation, as well as the oxidative fragmentation of the pentose substrate in the photorespiration process. Both reactions occur simultaneously and in competition at the same active site. The protein is Ribulose bisphosphate carboxylase large chain of Phalaenopsis aphrodite subsp. formosana (Moth orchid).